Reading from the N-terminus, the 654-residue chain is tRNA 5-methylaminomethyl-2-thiouridine biosynthesis bifunctional protein MnmC (654 aa).

The tract at residues 1 to 236 (MSTLLQHAQI…KWEVMSGAYV (236 aa)) is tRNA (mnm(5)s(2)U34)-methyltransferase. An FAD-dependent cmnm(5)s(2)U34 oxidoreductase region spans residues 262 to 654 (IGAGLAGSTT…FALRRLIRGK (393 aa)).

The protein in the N-terminal section; belongs to the methyltransferase superfamily. tRNA (mnm(5)s(2)U34)-methyltransferase family. It in the C-terminal section; belongs to the DAO family. FAD serves as cofactor.

The protein localises to the cytoplasm. The catalysed reaction is 5-aminomethyl-2-thiouridine(34) in tRNA + S-adenosyl-L-methionine = 5-methylaminomethyl-2-thiouridine(34) in tRNA + S-adenosyl-L-homocysteine + H(+). Its function is as follows. Catalyzes the last two steps in the biosynthesis of 5-methylaminomethyl-2-thiouridine (mnm(5)s(2)U) at the wobble position (U34) in tRNA. Catalyzes the FAD-dependent demodification of cmnm(5)s(2)U34 to nm(5)s(2)U34, followed by the transfer of a methyl group from S-adenosyl-L-methionine to nm(5)s(2)U34, to form mnm(5)s(2)U34. The sequence is that of tRNA 5-methylaminomethyl-2-thiouridine biosynthesis bifunctional protein MnmC from Pseudomonas putida (strain GB-1).